Consider the following 376-residue polypeptide: N-acetyldiaminopimelate deacetylase (376 aa).

Asp69 is a catalytic residue. The Proton acceptor role is filled by Glu128.

Belongs to the peptidase M20A family. N-acetyldiaminopimelate deacetylase subfamily.

The enzyme catalyses N-acetyl-(2S,6S)-2,6-diaminopimelate + H2O = (2S,6S)-2,6-diaminopimelate + acetate. It functions in the pathway amino-acid biosynthesis; L-lysine biosynthesis via DAP pathway; LL-2,6-diaminopimelate from (S)-tetrahydrodipicolinate (acetylase route): step 3/3. In terms of biological role, catalyzes the conversion of N-acetyl-diaminopimelate to diaminopimelate and acetate. The sequence is that of N-acetyldiaminopimelate deacetylase from Streptococcus pneumoniae serotype 4 (strain ATCC BAA-334 / TIGR4).